A 353-amino-acid polypeptide reads, in one-letter code: Photosystem II protein D1 (353 aa).

An N-acetylthreonine modification is found at Thr2. Thr2 is modified (phosphothreonine). 3 consecutive transmembrane segments (helical) span residues 29–46 (YIGW…TATS), 118–133 (HFLL…EWEL), and 142–156 (WIAV…AATA). A chlorophyll a-binding site is contributed by His118. Residue Tyr126 participates in pheophytin a binding. [CaMn4O5] cluster is bound by residues Asp170 and Glu189. Residues 197–218 (FHMLGVAGVFGGSLFSAMHGSL) traverse the membrane as a helical segment. Chlorophyll a is bound at residue His198. Residues His215 and 264-265 (SF) contribute to the a quinone site. Position 215 (His215) interacts with Fe cation. His272 contributes to the Fe cation binding site. The chain crosses the membrane as a helical span at residues 274-288 (FLAAWPVVGIWFTAL). [CaMn4O5] cluster is bound by residues His332, Glu333, Asp342, and Ala344. The propeptide occupies 345–353 (AVEAPSTNG).

The protein belongs to the reaction center PufL/M/PsbA/D family. In terms of assembly, PSII is composed of 1 copy each of membrane proteins PsbA, PsbB, PsbC, PsbD, PsbE, PsbF, PsbH, PsbI, PsbJ, PsbK, PsbL, PsbM, PsbT, PsbX, PsbY, PsbZ, Psb30/Ycf12, at least 3 peripheral proteins of the oxygen-evolving complex and a large number of cofactors. It forms dimeric complexes. The D1/D2 heterodimer binds P680, chlorophylls that are the primary electron donor of PSII, and subsequent electron acceptors. It shares a non-heme iron and each subunit binds pheophytin, quinone, additional chlorophylls, carotenoids and lipids. D1 provides most of the ligands for the Mn4-Ca-O5 cluster of the oxygen-evolving complex (OEC). There is also a Cl(-1) ion associated with D1 and D2, which is required for oxygen evolution. The PSII complex binds additional chlorophylls, carotenoids and specific lipids. serves as cofactor. Post-translationally, tyr-161 forms a radical intermediate that is referred to as redox-active TyrZ, YZ or Y-Z. C-terminally processed by CTPA; processing is essential to allow assembly of the oxygen-evolving complex and thus photosynthetic growth.

The protein localises to the plastid. Its subcellular location is the chloroplast thylakoid membrane. It catalyses the reaction 2 a plastoquinone + 4 hnu + 2 H2O = 2 a plastoquinol + O2. Its function is as follows. Photosystem II (PSII) is a light-driven water:plastoquinone oxidoreductase that uses light energy to abstract electrons from H(2)O, generating O(2) and a proton gradient subsequently used for ATP formation. It consists of a core antenna complex that captures photons, and an electron transfer chain that converts photonic excitation into a charge separation. The D1/D2 (PsbA/PsbD) reaction center heterodimer binds P680, the primary electron donor of PSII as well as several subsequent electron acceptors. The sequence is that of Photosystem II protein D1 from Lepidium virginicum (Virginia pepperweed).